The following is a 273-amino-acid chain: Proteasome subunit alpha (273 aa).

The segment at 231-273 is disordered; it reads DDGAAGQPPSSSDTDTSAAEARKPTASAGSADLEGPEPERPDS. Positions 238 to 249 are enriched in low complexity; that stretch reads PPSSSDTDTSAA.

It belongs to the peptidase T1A family. As to quaternary structure, the 20S proteasome core is composed of 14 alpha and 14 beta subunits that assemble into four stacked heptameric rings, resulting in a barrel-shaped structure. The two inner rings, each composed of seven catalytic beta subunits, are sandwiched by two outer rings, each composed of seven alpha subunits. The catalytic chamber with the active sites is on the inside of the barrel. Has a gated structure, the ends of the cylinder being occluded by the N-termini of the alpha-subunits. Is capped by the proteasome-associated ATPase, ARC.

The protein localises to the cytoplasm. The protein operates within protein degradation; proteasomal Pup-dependent pathway. With respect to regulation, the formation of the proteasomal ATPase ARC-20S proteasome complex, likely via the docking of the C-termini of ARC into the intersubunit pockets in the alpha-rings, may trigger opening of the gate for substrate entry. Interconversion between the open-gate and close-gate conformations leads to a dynamic regulation of the 20S proteasome proteolysis activity. Component of the proteasome core, a large protease complex with broad specificity involved in protein degradation. The protein is Proteasome subunit alpha of Salinispora arenicola (strain CNS-205).